A 659-amino-acid chain; its full sequence is uncharacterized protein (659 aa).

Transmembrane regions (helical) follow at residues 24-44, 71-91, 115-135, 157-177, 183-203, 214-234, 242-262, 279-299, 311-331, 365-385, 393-413, 433-453, 490-510, 517-537, 550-570, and 596-616; these read TTLM…YGLF, FGAS…VMMV, IGWL…DSGV, RAWI…RVII, FVLL…GNAG, AVIV…TAAL, AVLI…AELV, LGLV…WALV, LTAL…VQTA, FDSL…AGFV, TWPV…VFTS, MTLN…TLAL, FILF…DTLV, EFMA…IIGI, IGLL…LMTM, and IGGA…IVAL.

To M.tuberculosis Rv0102.

The protein localises to the cell membrane. This is an uncharacterized protein from Mycobacterium leprae (strain TN).